The primary structure comprises 421 residues: UPF0415 protein C7orf25 homolog (421 aa).

This sequence belongs to the UPF0415 family.

In Rattus norvegicus (Rat), this protein is UPF0415 protein C7orf25 homolog.